A 1231-amino-acid chain; its full sequence is S-layer protein A (1231 aa).

A signal peptide spans 1 to 35; sequence MNKTLGLILTSVFLLSTLGIITGFVIPTQAANSND.

Belongs to the Sulfolobales SlaA family. The mushroom-shaped unit cells of the Sulfolobales' S-layers may consist of three SlaB subunits and six SlaA subunits.

The protein localises to the secreted. It localises to the cell wall. The protein resides in the S-layer. In terms of biological role, S-layer large protein. May form the highly ordered outer sheath. The sequence is that of S-layer protein A from Saccharolobus solfataricus (strain ATCC 35092 / DSM 1617 / JCM 11322 / P2) (Sulfolobus solfataricus).